The primary structure comprises 254 residues: Pimeloyl-[acyl-carrier protein] methyl ester esterase (254 aa).

Positions Val14–His238 constitute an AB hydrolase-1 domain. Substrate is bound by residues Trp20, Ser80–Leu81, and Phe142–Gln146. The Nucleophile role is filled by Ser80. Residues Asp204 and His232 contribute to the active site. His232 is a binding site for substrate.

The protein belongs to the AB hydrolase superfamily. Carboxylesterase BioH family. As to quaternary structure, monomer.

The protein resides in the cytoplasm. The enzyme catalyses 6-carboxyhexanoyl-[ACP] methyl ester + H2O = 6-carboxyhexanoyl-[ACP] + methanol + H(+). It functions in the pathway cofactor biosynthesis; biotin biosynthesis. The physiological role of BioH is to remove the methyl group introduced by BioC when the pimeloyl moiety is complete. It allows to synthesize pimeloyl-ACP via the fatty acid synthetic pathway through the hydrolysis of the ester bonds of pimeloyl-ACP esters. In Chromobacterium violaceum (strain ATCC 12472 / DSM 30191 / JCM 1249 / CCUG 213 / NBRC 12614 / NCIMB 9131 / NCTC 9757 / MK), this protein is Pimeloyl-[acyl-carrier protein] methyl ester esterase.